A 331-amino-acid chain; its full sequence is MAAVALPLLLLLASPATPTPARDPFSPQLGDTQRCQQRCRQRHPGLPPAQPEPEGPSESPNNKAVLINACERGCRLFSICRFVARSSRPNATETECEAACTEAYVKAKEQQACSEGCWGQIPEPETQLEQKELALDPPSGSLSLRHLFTMLCSDLMSSAQDLISSTWTYSLQTDNRKTQPVVENFAFQGSRLQRVEVTWRGSHPKALEVHMDPMSPLEKVRRAKPHLKTSKAKVESEDQQESDFLSCMSRRSGLPRWVLFCCLFLSVLIILWLSCCTLVTTPGQHLKFQPLTAEQHKGLLVESNWPLYPPLPPAYEDSPPPYKLKLDLTTL.

Positions 1–21 (MAAVALPLLLLLASPATPTPA) are cleaved as a signal peptide. The interval 15–62 (PATPTPARDPFSPQLGDTQRCQQRCRQRHPGLPPAQPEPEGPSESPNN) is disordered. The span at 45 to 54 (GLPPAQPEPE) shows a compositional bias: pro residues. A glycan (N-linked (GlcNAc...) asparagine) is linked at N90. The chain crosses the membrane as a helical span at residues 258 to 278 (VLFCCLFLSVLIILWLSCCTL). The Microbody targeting signal motif lies at 329–331 (TTL).

It belongs to the TMEM59 family.

The protein resides in the golgi apparatus membrane. Functionally, modulates the O-glycosylation and complex N-glycosylation steps occurring during the Golgi maturation of APP. Inhibits APP transport to the cell surface and further shedding. This Rattus norvegicus (Rat) protein is Transmembrane protein 59-like (Tmem59l).